The following is a 265-amino-acid chain: tRNA (guanine-N(7)-)-methyltransferase (265 aa).

The span at 1–16 shows a compositional bias: basic and acidic residues; sequence MNHDDPNASGVPHDDA. The interval 1–40 is disordered; that stretch reads MNHDDPNASGVPHDDANDAAPASASDAARATGHADDESSP. Positions 18 to 31 are enriched in low complexity; the sequence is DAAPASASDAARAT. S-adenosyl-L-methionine is bound by residues glutamate 95, glutamate 120, aspartate 147, and aspartate 170. Aspartate 170 is a catalytic residue. Substrate-binding positions include lysine 174, aspartate 206, and 241–244; that span reads TKFE.

The protein belongs to the class I-like SAM-binding methyltransferase superfamily. TrmB family.

It carries out the reaction guanosine(46) in tRNA + S-adenosyl-L-methionine = N(7)-methylguanosine(46) in tRNA + S-adenosyl-L-homocysteine. It participates in tRNA modification; N(7)-methylguanine-tRNA biosynthesis. Its function is as follows. Catalyzes the formation of N(7)-methylguanine at position 46 (m7G46) in tRNA. In Burkholderia thailandensis (strain ATCC 700388 / DSM 13276 / CCUG 48851 / CIP 106301 / E264), this protein is tRNA (guanine-N(7)-)-methyltransferase.